The primary structure comprises 472 residues: Glutamate--tRNA ligase (472 aa).

The 'HIGH' region signature appears at 7–17; that stretch reads PSPTGFLHVGG. The Zn(2+) site is built by cysteine 96, cysteine 98, cysteine 123, and histidine 125. Positions 112–129 are enriched in basic and acidic residues; it reads ARKEKPRYDGRCRHRSEP. The disordered stretch occupies residues 112-134; it reads ARKEKPRYDGRCRHRSEPPSDQP. The 'KMSKS' region motif lies at 234–238; sequence KLSKR. Residue lysine 237 coordinates ATP.

It belongs to the class-I aminoacyl-tRNA synthetase family. Glutamate--tRNA ligase type 1 subfamily. As to quaternary structure, monomer. It depends on Zn(2+) as a cofactor.

The protein resides in the cytoplasm. It catalyses the reaction tRNA(Glu) + L-glutamate + ATP = L-glutamyl-tRNA(Glu) + AMP + diphosphate. In terms of biological role, catalyzes the attachment of glutamate to tRNA(Glu) in a two-step reaction: glutamate is first activated by ATP to form Glu-AMP and then transferred to the acceptor end of tRNA(Glu). This chain is Glutamate--tRNA ligase, found in Magnetococcus marinus (strain ATCC BAA-1437 / JCM 17883 / MC-1).